The chain runs to 473 residues: O-methyltransferase ARMGADRAFT_1088206 (473 aa).

S-adenosyl-L-methionine is bound by residues 276 to 277 (AG), aspartate 299, 330 to 331 (DM), and arginine 348. Histidine 352 serves as the catalytic Proton acceptor.

This sequence belongs to the class I-like SAM-binding methyltransferase superfamily. Cation-independent O-methyltransferase family.

It participates in secondary metabolite biosynthesis. O-methyltransferase, part of the gene cluster that mediates the biosynthesis of melleolides, a range of antifungal and phytotoxic polyketide derivatives composed of an orsellinic acid (OA) moiety esterified to various sesquiterpene alcohols. The first step in melleolides biosynthesis is performed by the delta(6)-protoilludene synthase PRO1 which catalyzes the cyclization of farnesyl diphosphate to protoilludene. The orsellinic acid synthase armB produces OA by condensing acetyl-CoA with 3 malonyl-CoA units in a three-round chain elongation reaction folowed by a C2-C7 ring closure. ArmB further catalyzes the trans-esterification of OA to the various sesquiterpene alcohols resulting from the hydroxylation of protoilludene. The melleolides cluster also includes 5 cytochrome P450 monooxygenases, 4 NAD(+)-dependent oxidoreductases, one flavin-dependent oxidoreductase, and one O-methyltransferase. The cytochrome P450 monooxygenases may be involved in protoilludene hydroxylation to elaborate melleolides with multiple alcohol groups, such as melleolide D, which carries alcohol functionalities at C-4, C-5, C-10, and C-13. The role of the NAD(+)-dependent enzymes remains unknown. Numerous melleolides, including arnamial, show 5'-O-methylation of the aromatic moiety which may be catalyzed by the methyltransferase encoded in the cluster. The flavin-dependent oxidoreductase might represent the dehydrogenase yielding the aldehyde in position 1 of arnamial and other melleolides. Finally, several halogenase localized outside of the cluster, are able to catalyze the transfer of a single chlorine atom to the melleolide backbone, resulting in a 6'-chloromelleolide product. The chain is O-methyltransferase ARMGADRAFT_1088206 from Armillaria gallica (Bulbous honey fungus).